The chain runs to 175 residues: Replication restart protein PriC (175 aa).

It belongs to the PriC family. In terms of assembly, monomer. Oligomerizes in the absence of DNA. Component of the replication restart primosome, which is composed of PriA, PriB, PriC, DnaB and DnaT; DnaG primase associates transiently with this complex. Interacts with the C-terminus of SSB; this interaction is required for DnaB loading onto substrate replication forks. Interacts with DnaB alone and in the DnaB-DnaC complex, probably 1:1 binding with DnaB.

Functionally, involved in the restart of stalled replication forks, which reloads the replicative helicase (DnaB) on sites other than the origin of replication. Recognizes abandoned replication forks and remodels DNA single-stranded binding protein (SSB) on ssDNA to uncover a loading site for DnaB. There are several restart pathways, the PriA-PriC pathway is a minor restart pathway. Also part of the minor PriC-Rep pathway for restart of stalled replication forks, which has a different substrate specificity than PriA. priB and priC have redundant roles in the cell. Stimulates the 3'-5' helicase activity of Rep helicase in vitro. In vitro can load the DnaB replicative helicase from a DnaB-DnaC complex on an SSB-coated stalled replication fork with no leading- or lagging-strand (or with a gap between the leading strand and fork junction) in the absence of other primosome proteins (PriA, PriB or DnaT). Also part of the major restart pathway with PriA, PriB, DnaB, DnaT and DnaG primase. PriC may contribute to the stability of the preprimosome complex. Preferentially binds approximately 7-9 nucleotides of single-stranded (ss)DNA, also binds double-stranded (ds)DNA. PriB is probably more important in the cell than PriC. The protein is Replication restart protein PriC of Escherichia coli (strain K12).